Consider the following 167-residue polypeptide: Probable chemoreceptor glutamine deamidase CheD (167 aa).

This sequence belongs to the CheD family.

It catalyses the reaction L-glutaminyl-[protein] + H2O = L-glutamyl-[protein] + NH4(+). Probably deamidates glutamine residues to glutamate on methyl-accepting chemotaxis receptors (MCPs), playing an important role in chemotaxis. The polypeptide is Probable chemoreceptor glutamine deamidase CheD (Natronomonas pharaonis (strain ATCC 35678 / DSM 2160 / CIP 103997 / JCM 8858 / NBRC 14720 / NCIMB 2260 / Gabara) (Halobacterium pharaonis)).